The chain runs to 185 residues: Ribosome-recycling factor (185 aa).

Residues 137-166 form a disordered region; sequence DGLKKAEKDGDIGQDESRGQSEKVQKMTDD.

It belongs to the RRF family.

It localises to the cytoplasm. Functionally, responsible for the release of ribosomes from messenger RNA at the termination of protein biosynthesis. May increase the efficiency of translation by recycling ribosomes from one round of translation to another. The chain is Ribosome-recycling factor from Agrobacterium fabrum (strain C58 / ATCC 33970) (Agrobacterium tumefaciens (strain C58)).